Consider the following 151-residue polypeptide: Large ribosomal subunit protein uL15 (151 aa).

The tract at residues 1-60 (MAENNPLKIHNLRPAPGAKTAKTRVGRGEASKGKTAGRGTKGTKARYQVPERFEGGQMPL) is disordered.

It belongs to the universal ribosomal protein uL15 family. Part of the 50S ribosomal subunit.

Functionally, binds to the 23S rRNA. The polypeptide is Large ribosomal subunit protein uL15 (Streptomyces avermitilis (strain ATCC 31267 / DSM 46492 / JCM 5070 / NBRC 14893 / NCIMB 12804 / NRRL 8165 / MA-4680)).